A 394-amino-acid chain; its full sequence is Cysteine protease ATG4B (394 aa).

Cys74 acts as the Nucleophile in catalysis. Residues Asp280 and His282 contribute to the active site. The short motif at 389-392 (FEIL) is the LIR element.

Belongs to the peptidase C54 family.

It is found in the cytoplasm. The protein resides in the cytosol. It localises to the cytoplasmic vesicle. Its subcellular location is the autophagosome. The protein localises to the endoplasmic reticulum. It is found in the mitochondrion. The catalysed reaction is [protein]-C-terminal L-amino acid-glycyl-phosphatidylethanolamide + H2O = [protein]-C-terminal L-amino acid-glycine + a 1,2-diacyl-sn-glycero-3-phosphoethanolamine. It carries out the reaction [protein]-C-terminal L-amino acid-glycyl-phosphatidylserine + H2O = [protein]-C-terminal L-amino acid-glycine + a 1,2-diacyl-sn-glycero-3-phospho-L-serine. Cysteine protease that plays a key role in autophagy by mediating both proteolytic activation and delipidation of ATG8 family proteins. Required for canonical autophagy (macroautophagy), non-canonical autophagy as well as for mitophagy. The protease activity is required for proteolytic activation of ATG8 family proteins: cleaves the C-terminal amino acid of ATG8 proteins to reveal a C-terminal glycine. Exposure of the glycine at the C-terminus is essential for ATG8 proteins conjugation to phosphatidylethanolamine (PE) and insertion to membranes, which is necessary for autophagy. Protease activity is also required to counteract formation of high-molecular weight conjugates of ATG8 proteins (ATG8ylation): acts as a deubiquitinating-like enzyme that removes ATG8 conjugated to other proteins, such as ATG3. In addition to the protease activity, also mediates delipidation of ATG8 family proteins. Catalyzes delipidation of PE-conjugated forms of ATG8 proteins during macroautophagy. Also involved in non-canonical autophagy, a parallel pathway involving conjugation of ATG8 proteins to single membranes at endolysosomal compartments, by catalyzing delipidation of ATG8 proteins conjugated to phosphatidylserine (PS). In Danio rerio (Zebrafish), this protein is Cysteine protease ATG4B.